Here is a 217-residue protein sequence, read N- to C-terminus: tRNA (guanine-N(7)-)-methyltransferase (217 aa).

4 residues coordinate S-adenosyl-L-methionine: glutamate 43, aspartate 68, asparagine 101, and asparagine 123. A substrate-binding site is contributed by lysine 127. The interval 129–134 is interaction with RNA; it reads RHNKRR. Substrate contacts are provided by residues aspartate 159 and 196–199; that span reads TEYE.

The protein belongs to the class I-like SAM-binding methyltransferase superfamily. TrmB family.

It catalyses the reaction guanosine(46) in tRNA + S-adenosyl-L-methionine = N(7)-methylguanosine(46) in tRNA + S-adenosyl-L-homocysteine. It participates in tRNA modification; N(7)-methylguanine-tRNA biosynthesis. Catalyzes the formation of N(7)-methylguanine at position 46 (m7G46) in tRNA. The sequence is that of tRNA (guanine-N(7)-)-methyltransferase from Clostridium botulinum (strain 657 / Type Ba4).